The following is a 289-amino-acid chain: LETDLDVVAINDPFIDLAYMVYMFKYDSVHGRFSGSVETKDGKLWINQKPITVFRKRDPVQIPWGSAGAEYIVESTGVFTTTEKASAHLKGGAKKIVISAPSADAPMFVCGVNLDKYDPKFQVVSNASCTTNCLAPLAKVVNDKFGIVEGLMTTVHATTATQKTVDGPSAKDWRGGRSVNNNIIPSSTGAAKAVGKVIPELNGKLTGLSFRVPTLDVSVVDLVVRIEQSATYDEIKEAFREASKGSLKGIIEYTDEHVVSTDFIGHTASSIFDSLAGIQLNANFVKLIA.

NAD(+)-binding residues include Asp12 and Arg57. D-glyceraldehyde 3-phosphate is bound by residues 128-130 (SCT), Thr159, 188-189 (TG), and Arg211. Cys129 (nucleophile) is an active-site residue.

This sequence belongs to the glyceraldehyde-3-phosphate dehydrogenase family. In terms of assembly, homotetramer.

Its subcellular location is the cytoplasm. It catalyses the reaction D-glyceraldehyde 3-phosphate + phosphate + NAD(+) = (2R)-3-phospho-glyceroyl phosphate + NADH + H(+). It participates in carbohydrate degradation; glycolysis; pyruvate from D-glyceraldehyde 3-phosphate: step 1/5. In Amanita muscaria (Fly agaric), this protein is Glyceraldehyde-3-phosphate dehydrogenase (GPD).